A 276-amino-acid polypeptide reads, in one-letter code: Rhomboid protease GlpG (276 aa).

Transmembrane regions (helical) follow at residues 94–114, 142–162, 169–189, 192–212, 229–249, and 250–270; these read GPVT…MQIL, ALMH…WYLG, LGSG…GYVQ, FSGP…GYVW, LIIF…GMSM, and ANGA…VDSL. The active-site Nucleophile is S201. H254 is an active-site residue.

This sequence belongs to the peptidase S54 family.

The protein resides in the cell inner membrane. It catalyses the reaction Cleaves type-1 transmembrane domains using a catalytic dyad composed of serine and histidine that are contributed by different transmembrane domains.. In terms of biological role, rhomboid-type serine protease that catalyzes intramembrane proteolysis. The protein is Rhomboid protease GlpG of Escherichia coli O7:K1 (strain IAI39 / ExPEC).